The following is a 95-amino-acid chain: Cytosolic calcium-binding protein 3 (95 aa).

6 consecutive repeat copies span residues 30–35, 39–43, 54–59, 67–71, 75–79, and 90–94. The 6 X 5 AA approximate repeats of V-E-E-K-K stretch occupies residues 30–94; that stretch reads VEDAEKTNED…AEEVAVEKAK (65 aa). Residues 54–95 are disordered; the sequence is VEEEKKAEEVTETPEEKKTEALEEKQTEVAAAEEVAVEKAKE. Residues 55–80 are compositionally biased toward basic and acidic residues; it reads EEEKKAEEVTETPEEKKTEALEEKQT.

Low levels in roots (e.g. in cambium) and barely expressed in stems, shoots, flowers, siliques and leaves.

The protein resides in the cytoplasm. It localises to the cytosol. Functionally, binds calcium Ca(2+) and may act as a signal mediator to buffer Ca(2+). The chain is Cytosolic calcium-binding protein 3 from Arabidopsis thaliana (Mouse-ear cress).